We begin with the raw amino-acid sequence, 600 residues long: DNA repair and recombination protein mus-11 (600 aa).

The DNA-binding element occupies 148–152 (KRALR). Residues 268 to 319 (LNPQAQQSRPLSRSGSTGSLNTRQQPQNSHQFTARAQSRPPQQQLNSNQSRP) show a composition bias toward polar residues. Disordered stretches follow at residues 268-357 (LNPQ…AGAA) and 387-600 (APKP…QRLA). 2 stretches are compositionally biased toward low complexity: residues 325–343 (NNSS…TTPQ) and 458–470 (ARSA…RAGP). The span at 502 to 512 (GFSSSPSTNRG) shows a compositional bias: polar residues. 2 stretches are compositionally biased toward low complexity: residues 540 to 564 (SATT…APSA) and 577 to 591 (ANAS…ATSG).

It belongs to the RAD52 family. In terms of assembly, part of a complex that includes mei-3/rad51 and mus-11/rad52.

Its subcellular location is the nucleus. Functionally, involved in DNA double-strand break (DSB) repair and recombination. Promotes the annealing of complementary single-stranded DNA and by stimulation of the mei-3/rad51 recombinase. The sequence is that of DNA repair and recombination protein mus-11 (mus-11) from Neurospora crassa (strain ATCC 24698 / 74-OR23-1A / CBS 708.71 / DSM 1257 / FGSC 987).